A 121-amino-acid chain; its full sequence is Chronic lymphocytic leukemia up-regulated protein 1 (121 aa).

As to expression, specifically expressed in chronic lymphocytic leukemia (CLL) cells from patients without immunoglobulin heavy-chain hypermutations. Expression is detected in all CLL cells and levels are similar in patients before and after treatment.

The protein resides in the cytoplasm. This is Chronic lymphocytic leukemia up-regulated protein 1 (CLLU1) from Homo sapiens (Human).